The primary structure comprises 73 residues: uncharacterized protein (73 aa).

This sequence belongs to the asfivirus DP63R family.

This is an uncharacterized protein from Ornithodoros (relapsing fever ticks).